The sequence spans 682 residues: uncharacterized protein (682 aa).

This is an uncharacterized protein from Saccharomyces cerevisiae (strain ATCC 204508 / S288c) (Baker's yeast).